The sequence spans 292 residues: 2-dehydro-3-deoxygalactonokinase (292 aa).

This sequence belongs to the DgoK family.

The enzyme catalyses 2-dehydro-3-deoxy-D-galactonate + ATP = 2-dehydro-3-deoxy-6-phospho-D-galactonate + ADP + H(+). It functions in the pathway carbohydrate acid metabolism; D-galactonate degradation; D-glyceraldehyde 3-phosphate and pyruvate from D-galactonate: step 2/3. The polypeptide is 2-dehydro-3-deoxygalactonokinase (dgoK) (Escherichia coli (strain K12)).